A 277-amino-acid polypeptide reads, in one-letter code: Large ribosomal subunit protein uL2 (277 aa).

2 disordered regions span residues 28–55 (EPEK…RHRG) and 207–277 (KAGR…RTQG). Basic residues-rich tracts occupy residues 34–43 (THHKHSKQGR), 209–220 (GRTRHRGQRPHV), and 255–265 (LGRKTRNKKKR).

The protein belongs to the universal ribosomal protein uL2 family. As to quaternary structure, part of the 50S ribosomal subunit. Forms a bridge to the 30S subunit in the 70S ribosome.

Functionally, one of the primary rRNA binding proteins. Required for association of the 30S and 50S subunits to form the 70S ribosome, for tRNA binding and peptide bond formation. It has been suggested to have peptidyltransferase activity; this is somewhat controversial. Makes several contacts with the 16S rRNA in the 70S ribosome. In Microcystis aeruginosa (strain NIES-843 / IAM M-2473), this protein is Large ribosomal subunit protein uL2.